The sequence spans 315 residues: Olfactory receptor 3A1 (315 aa).

The Extracellular portion of the chain corresponds to Met1 to Pro28. Asn8 is a glycosylation site (N-linked (GlcNAc...) asparagine). A helical membrane pass occupies residues Val29 to Val52. Residues Leu53–Thr60 are Cytoplasmic-facing. Residues Pro61–Pro82 form a helical membrane-spanning segment. Residues Ser83–Gln103 are Extracellular-facing. Cys100 and Cys192 are joined by a disulfide. The helical transmembrane segment at Leu104–Tyr123 threads the bilayer. Topologically, residues Asp124–Val143 are cytoplasmic. Residues Gln144–Thr161 traverse the membrane as a helical segment. Over His162–Glu199 the chain is Extracellular. The chain crosses the membrane as a helical span at residues Leu200 to His223. The Cytoplasmic portion of the chain corresponds to Val224–Ala240. Residues Phe241–Arg264 traverse the membrane as a helical segment. The Extracellular segment spans residues Leu265 to Lys275. The chain crosses the membrane as a helical span at residues Ala276–Phe295. Residues Arg296–Ala315 lie on the Cytoplasmic side of the membrane.

The protein belongs to the G-protein coupled receptor 1 family.

Its subcellular location is the cell membrane. Functionally, odorant receptor. This chain is Olfactory receptor 3A1 (OR3A1), found in Homo sapiens (Human).